The following is a 259-amino-acid chain: Phosphatidylglycerol--prolipoprotein diacylglyceryl transferase (259 aa).

Helical transmembrane passes span 12–32 (LAIH…VYLA), 41–61 (ISSD…IVGA), 80–100 (IIAI…GALV), and 109–129 (VLNP…AQAI). Arg-131 lines the a 1,2-diacyl-sn-glycero-3-phospho-(1'-sn-glycerol) pocket. Transmembrane regions (helical) follow at residues 167–187 (IPTF…IMMW), 194–214 (LLDG…RLVI), and 226–246 (GIRI…IFVI).

It belongs to the Lgt family.

Its subcellular location is the cell membrane. The catalysed reaction is L-cysteinyl-[prolipoprotein] + a 1,2-diacyl-sn-glycero-3-phospho-(1'-sn-glycerol) = an S-1,2-diacyl-sn-glyceryl-L-cysteinyl-[prolipoprotein] + sn-glycerol 1-phosphate + H(+). It participates in protein modification; lipoprotein biosynthesis (diacylglyceryl transfer). Catalyzes the transfer of the diacylglyceryl group from phosphatidylglycerol to the sulfhydryl group of the N-terminal cysteine of a prolipoprotein, the first step in the formation of mature lipoproteins. The polypeptide is Phosphatidylglycerol--prolipoprotein diacylglyceryl transferase (Streptococcus pyogenes serotype M49 (strain NZ131)).